The following is a 551-amino-acid chain: Glucans biosynthesis protein D (551 aa).

The tat-type signal signal peptide spans Met1 to Ala32.

Belongs to the OpgD/OpgG family. In terms of processing, predicted to be exported by the Tat system. The position of the signal peptide cleavage has not been experimentally proven.

Its subcellular location is the periplasm. The protein operates within glycan metabolism; osmoregulated periplasmic glucan (OPG) biosynthesis. Its function is as follows. Probably involved in the control of the structural glucose backbone of osmoregulated periplasmic glucans (OPGs). This is Glucans biosynthesis protein D from Escherichia coli (strain K12 / MC4100 / BW2952).